The following is a 565-amino-acid chain: NAD-dependent malic enzyme (565 aa).

Catalysis depends on Tyr104, which acts as the Proton donor. Arg157 contributes to the NAD(+) binding site. Lys175 functions as the Proton acceptor in the catalytic mechanism. Residues Glu246, Asp247, and Asp270 each coordinate a divalent metal cation. NAD(+)-binding residues include Asp270 and Asn418.

The protein belongs to the malic enzymes family. Homotetramer. It depends on Mg(2+) as a cofactor. The cofactor is Mn(2+).

It catalyses the reaction (S)-malate + NAD(+) = pyruvate + CO2 + NADH. The catalysed reaction is oxaloacetate + H(+) = pyruvate + CO2. The protein is NAD-dependent malic enzyme of Klebsiella pneumoniae subsp. pneumoniae (strain ATCC 700721 / MGH 78578).